The chain runs to 402 residues: NADH-quinone oxidoreductase subunit D (402 aa).

This sequence belongs to the complex I 49 kDa subunit family. As to quaternary structure, NDH-1 is composed of 14 different subunits. Subunits NuoB, C, D, E, F, and G constitute the peripheral sector of the complex.

The protein resides in the cell inner membrane. It catalyses the reaction a quinone + NADH + 5 H(+)(in) = a quinol + NAD(+) + 4 H(+)(out). Its function is as follows. NDH-1 shuttles electrons from NADH, via FMN and iron-sulfur (Fe-S) centers, to quinones in the respiratory chain. The immediate electron acceptor for the enzyme in this species is believed to be ubiquinone. Couples the redox reaction to proton translocation (for every two electrons transferred, four hydrogen ions are translocated across the cytoplasmic membrane), and thus conserves the redox energy in a proton gradient. This is NADH-quinone oxidoreductase subunit D from Nitrobacter winogradskyi (strain ATCC 25391 / DSM 10237 / CIP 104748 / NCIMB 11846 / Nb-255).